A 354-amino-acid chain; its full sequence is Homeobox-leucine zipper protein HOX27 (354 aa).

The tract at residues 98-175 is disordered; that stretch reads SVAAGAPGME…DDEGASARKK (78 aa). The segment covering 148-157 has biased composition (gly residues); that stretch reads QGGGGGGGGE. The segment at residues 171–230 is a DNA-binding region (homeobox); the sequence is SARKKLRLSKEQSAFLEESFKEHSTLNPKQKVALAKQLNLRPRQVEVWFQNRRARTKLKQ. A leucine-zipper region spans residues 229–273; that stretch reads KQTEVDCEYLKRCCETLTEENRRLHKELAELRALKTARPFYMHLP. The tract at residues 294–323 is disordered; the sequence is STSAPAAATSPAAAPTAAARTAVASPEPHR.

This sequence belongs to the HD-ZIP homeobox family. Class II subfamily. In terms of tissue distribution, expressed in seedlings, roots, stems, leaf sheaths and blades and panicles.

Its subcellular location is the nucleus. Probable transcription factor. The protein is Homeobox-leucine zipper protein HOX27 (HOX27) of Oryza sativa subsp. indica (Rice).